A 410-amino-acid polypeptide reads, in one-letter code: LL-diaminopimelate aminotransferase (410 aa).

Substrate-binding residues include tyrosine 15 and glycine 42. Pyridoxal 5'-phosphate contacts are provided by residues tyrosine 72, 108–109, tyrosine 132, asparagine 187, tyrosine 218, and 246–248; these read AK and SFS. The substrate site is built by lysine 109, tyrosine 132, and asparagine 187. Residue lysine 249 is modified to N6-(pyridoxal phosphate)lysine. Arginine 257 and asparagine 292 together coordinate pyridoxal 5'-phosphate. The substrate site is built by asparagine 292 and arginine 388.

The protein belongs to the class-I pyridoxal-phosphate-dependent aminotransferase family. LL-diaminopimelate aminotransferase subfamily. In terms of assembly, homodimer. It depends on pyridoxal 5'-phosphate as a cofactor.

The enzyme catalyses (2S,6S)-2,6-diaminopimelate + 2-oxoglutarate = (S)-2,3,4,5-tetrahydrodipicolinate + L-glutamate + H2O + H(+). It functions in the pathway amino-acid biosynthesis; L-lysine biosynthesis via DAP pathway; LL-2,6-diaminopimelate from (S)-tetrahydrodipicolinate (aminotransferase route): step 1/1. Involved in the synthesis of meso-diaminopimelate (m-DAP or DL-DAP), required for both lysine and peptidoglycan biosynthesis. Catalyzes the direct conversion of tetrahydrodipicolinate to LL-diaminopimelate. The chain is LL-diaminopimelate aminotransferase from Picosynechococcus sp. (strain ATCC 27264 / PCC 7002 / PR-6) (Agmenellum quadruplicatum).